Here is a 177-residue protein sequence, read N- to C-terminus: Transcriptional regulator MET31 (177 aa).

The C2H2-type zinc-finger motif lies at 95-117; sequence YSCAKCQLKFSRSSDLRRHEKVH.

As to quaternary structure, interacts with MET4 and MET28.

It localises to the cytoplasm. The protein localises to the nucleus. In terms of biological role, auxiliary transcriptional regulator of sulfur amino acid metabolism. Involved in the transcriptional activation of MET28. The chain is Transcriptional regulator MET31 (MET31) from Saccharomyces cerevisiae (strain ATCC 204508 / S288c) (Baker's yeast).